Here is a 214-residue protein sequence, read N- to C-terminus: MTSEATLKLMQWLSPAYPVGAFAYSHGLEGAVSEGHVRDGDTLSDWLSDLLTHGGARSDALLLACAYRTETAESLAEIDDTARAFCPSAERLQETDLQGAAFCRTTAAIWDTALPSLTYPVAVGHAARLNDVALDLTLNMYLHAFLSNLVAAGQRLLSLGQTEAQQRLNACGPQLRRTVDAALSGTIDDLFGASFAADIASMRHETQYSRIFRS.

It belongs to the UreF family. UreD, UreF and UreG form a complex that acts as a GTP-hydrolysis-dependent molecular chaperone, activating the urease apoprotein by helping to assemble the nickel containing metallocenter of UreC. The UreE protein probably delivers the nickel.

It localises to the cytoplasm. Required for maturation of urease via the functional incorporation of the urease nickel metallocenter. The chain is Urease accessory protein UreF from Ruegeria sp. (strain TM1040) (Silicibacter sp.).